The primary structure comprises 207 residues: Cytochrome c biogenesis ATP-binding export protein CcmA (207 aa).

One can recognise an ABC transporter domain in the interval 4–207; it reads LEVRELLCER…RISLTQTRAV (204 aa). Residue 36 to 43 coordinates ATP; that stretch reads GSNGAGKT.

The protein belongs to the ABC transporter superfamily. CcmA exporter (TC 3.A.1.107) family. As to quaternary structure, the complex is composed of two ATP-binding proteins (CcmA) and two transmembrane proteins (CcmB).

It is found in the cell inner membrane. It catalyses the reaction heme b(in) + ATP + H2O = heme b(out) + ADP + phosphate + H(+). In terms of biological role, part of the ABC transporter complex CcmAB involved in the biogenesis of c-type cytochromes; once thought to export heme, this seems not to be the case, but its exact role is uncertain. Responsible for energy coupling to the transport system. The chain is Cytochrome c biogenesis ATP-binding export protein CcmA from Escherichia coli O157:H7.